The following is a 421-amino-acid chain: UDP-N-acetylglucosamine 1-carboxyvinyltransferase 2 (421 aa).

Residue 22–23 participates in phosphoenolpyruvate binding; the sequence is KN. R94 serves as a coordination point for UDP-N-acetyl-alpha-D-glucosamine. The active-site Proton donor is C118. C118 is subject to 2-(S-cysteinyl)pyruvic acid O-phosphothioketal. Residues D308 and I330 each contribute to the UDP-N-acetyl-alpha-D-glucosamine site.

This sequence belongs to the EPSP synthase family. MurA subfamily.

It is found in the cytoplasm. The catalysed reaction is phosphoenolpyruvate + UDP-N-acetyl-alpha-D-glucosamine = UDP-N-acetyl-3-O-(1-carboxyvinyl)-alpha-D-glucosamine + phosphate. Its pathway is cell wall biogenesis; peptidoglycan biosynthesis. Its function is as follows. Cell wall formation. Adds enolpyruvyl to UDP-N-acetylglucosamine. This chain is UDP-N-acetylglucosamine 1-carboxyvinyltransferase 2, found in Lactococcus lactis subsp. lactis (strain IL1403) (Streptococcus lactis).